A 347-amino-acid polypeptide reads, in one-letter code: tRNA pseudouridine synthase D (347 aa).

The Nucleophile role is filled by Asp81. Residues Gly158–Leu304 enclose the TRUD domain.

Belongs to the pseudouridine synthase TruD family.

The enzyme catalyses uridine(13) in tRNA = pseudouridine(13) in tRNA. Its function is as follows. Responsible for synthesis of pseudouridine from uracil-13 in transfer RNAs. The sequence is that of tRNA pseudouridine synthase D from Vibrio vulnificus (strain CMCP6).